Here is a 220-residue protein sequence, read N- to C-terminus: Tumor protein p53-inducible nuclear protein 2 (220 aa).

Positions 1–12 are enriched in low complexity; it reads MFQRLSSLFFST. 3 disordered regions span residues 1–24, 41–69, and 119–220; these read MFQR…CPRA, PDSY…LMDE, and PGSP…QFNY. Residue Ser14 is modified to Phosphoserine. An LIR motif is present at residues 26-41; sequence VSEEDEVDGWLIIDLP. The span at 47–64 shows a compositional bias: pro residues; the sequence is PPSPGAAPAPAGRPPPAP. A Phosphoserine modification is found at Ser136. The segment covering 152-170 has biased composition (low complexity); the sequence is HAAPLPARAALLEKAGQVR. Positions 205–220 are enriched in polar residues; sequence NQSSFIYQPCQRQFNY.

As to quaternary structure, interacts with VMP1, GABARAP, GABARAPL1, GABARAPL2, MAP1LC3A, MAP1LC3B, MAP1LC3C and THRA.

The protein localises to the cytoplasm. Its subcellular location is the cytosol. The protein resides in the nucleus. It localises to the PML body. It is found in the cytoplasmic vesicle. The protein localises to the autophagosome. Its function is as follows. Dual regulator of transcription and autophagy. Positively regulates autophagy and is required for autophagosome formation and processing. May act as a scaffold protein that recruits MAP1LC3A, GABARAP and GABARAPL2 and brings them to the autophagosome membrane by interacting with VMP1 where, in cooperation with the BECN1-PI3-kinase class III complex, they trigger autophagosome development. Acts as a transcriptional activator of THRA. This Homo sapiens (Human) protein is Tumor protein p53-inducible nuclear protein 2 (TP53INP2).